The following is a 779-amino-acid chain: FAD-dependent monooxygenase BOA8 (779 aa).

4 residues coordinate FAD: glutamate 85, arginine 128, aspartate 331, and alanine 344. Transmembrane regions (helical) follow at residues 471-491 (AQLA…KTPE), 504-524 (VKLD…IWTI), 542-562 (AFLL…YFFF), 587-607 (ILPL…WSSI), 618-638 (NAWY…KFIV), 665-685 (ILIC…SIAF), and 742-762 (LILT…GLIV).

Belongs to the paxM FAD-dependent monooxygenase family. Requires FAD as cofactor.

The protein resides in the membrane. It participates in polyketide biosynthesis. In terms of biological role, FAD-dependent monooxygenase; part of the gene cluster B that mediates the biosynthesis of botcinic acid and its botcinin derivatives, acetate-derived polyketides that contribute to virulence when combined with the sesquiterpene botrydial. Botcinic acid and its derivatives have been shown to induce chlorosis and necrosis during host plant infection, but also have antifungal activities. Two polyketide synthases, BOA6 and BOA9, are involved in the biosynthesis of botcinins. BOA6 mediates the formation of the per-methylated tetraketide core by condensation of four units of malonyl-CoA with one unit of acetyl-CoA, which would be methylated in activated methylene groups to yield a bicyclic acid intermediate that could then either be converted to botrylactone derivatives or lose the starter acetate unit through a retro-Claisen type C-C bond cleavage to yield botcinin derivatives. The second polyketide synthase, BOA9, is probably required for the biosynthesis of the tetraketide side chain of botcinins. The methyltransferase (MT) domain within BOA6 is probably responsible for the incorporation of four methyl groups. The trans-enoyl reductase BOA5 might take over the enoyl reductase function of BOA6 that misses an ER domain. The monooxygenases BOA2, BOA3 and BOA4 might be involved in further hydroxylations at C4, C5 and C8, whereas BOA7, close to BOA9, could potentially be involved in the hydroxylation at C4 in the side chain of botcinins. The protein is FAD-dependent monooxygenase BOA8 of Botryotinia fuckeliana (strain B05.10) (Noble rot fungus).